The sequence spans 141 residues: Probable mitochondrial pyruvate carrier 1 (141 aa).

2 helical membrane passes run 31-52 (YLCSTHFWGPLSNFGIPIAAIL) and 60-82 (LISGRMTGALILYSSVFMRYAWM).

Belongs to the mitochondrial pyruvate carrier (MPC) (TC 2.A.105) family. In terms of assembly, the functional 150 kDa pyruvate import complex is a heteromer of mpc1 and mpc2.

The protein localises to the mitochondrion. The protein resides in the mitochondrion inner membrane. Its function is as follows. Mediates the uptake of pyruvate into mitochondria. The sequence is that of Probable mitochondrial pyruvate carrier 1 from Schizosaccharomyces pombe (strain 972 / ATCC 24843) (Fission yeast).